The following is a 165-amino-acid chain: Endoribonuclease YbeY (165 aa).

3 residues coordinate Zn(2+): H119, H123, and H129.

This sequence belongs to the endoribonuclease YbeY family. It depends on Zn(2+) as a cofactor.

The protein localises to the cytoplasm. Single strand-specific metallo-endoribonuclease involved in late-stage 70S ribosome quality control and in maturation of the 3' terminus of the 16S rRNA. The sequence is that of Endoribonuclease YbeY from Streptomyces griseus subsp. griseus (strain JCM 4626 / CBS 651.72 / NBRC 13350 / KCC S-0626 / ISP 5235).